The following is a 609-amino-acid chain: NADH-ubiquinone oxidoreductase chain 5 (609 aa).

The next 16 helical transmembrane spans lie at 3–23 (VINL…LPIV), 41–61 (TAIS…IYSG), 90–110 (MIFV…SMWY), 115–135 (PFIN…MILV), 140–160 (LFQL…LIGW), 174–194 (AVLY…WFLI), 214–236 (VPLM…HPWL), 244–264 (TPVS…FLLI), 276–296 (MQTT…ICAL), 304–323 (IIAF…IGIN), 328–350 (AFLH…GSII), 368–388 (VLPF…GMPF), 410–432 (WALL…IMFF), 460–480 (LLLG…PTST), 491–511 (LMAL…NLTS), and 585–605 (GLIK…LMMI).

The protein belongs to the complex I subunit 5 family. In terms of assembly, core subunit of respiratory chain NADH dehydrogenase (Complex I) which is composed of 45 different subunits.

Its subcellular location is the mitochondrion inner membrane. It carries out the reaction a ubiquinone + NADH + 5 H(+)(in) = a ubiquinol + NAD(+) + 4 H(+)(out). Its function is as follows. Core subunit of the mitochondrial membrane respiratory chain NADH dehydrogenase (Complex I) which catalyzes electron transfer from NADH through the respiratory chain, using ubiquinone as an electron acceptor. Essential for the catalytic activity and assembly of complex I. This chain is NADH-ubiquinone oxidoreductase chain 5 (MT-ND5), found in Halichoerus grypus (Gray seal).